The following is a 222-amino-acid chain: Probable RNA 2'-phosphotransferase (222 aa).

The protein belongs to the KptA/TPT1 family.

Functionally, removes the 2'-phosphate from RNA via an intermediate in which the phosphate is ADP-ribosylated by NAD followed by a presumed transesterification to release the RNA and generate ADP-ribose 1''-2''-cyclic phosphate (APPR&gt;P). May function as an ADP-ribosylase. This Haloarcula marismortui (strain ATCC 43049 / DSM 3752 / JCM 8966 / VKM B-1809) (Halobacterium marismortui) protein is Probable RNA 2'-phosphotransferase.